The sequence spans 217 residues: Trimethylamine corrinoid protein (217 aa).

Residues 1–92 (MANKEEIIAK…EMEKRKSQTK (92 aa)) enclose the B12-binding N-terminal domain. In terms of domain architecture, B12-binding spans 94–217 (LGTVAIGTIE…VAKVKAALNV (124 aa)). A methylcob(III)alamin-binding site is contributed by H107.

Belongs to the methylamine corrinoid protein family. As to quaternary structure, can form a complex with MttB.

It functions in the pathway one-carbon metabolism; methanogenesis from trimethylamine. Acts probably as a methyl group carrier between MttB and either MtbA or MtaA. The polypeptide is Trimethylamine corrinoid protein (Methanosarcina barkeri).